A 456-amino-acid polypeptide reads, in one-letter code: Histidine--tRNA ligase (456 aa).

Belongs to the class-II aminoacyl-tRNA synthetase family. As to quaternary structure, homodimer.

It is found in the cytoplasm. The catalysed reaction is tRNA(His) + L-histidine + ATP = L-histidyl-tRNA(His) + AMP + diphosphate + H(+). The protein is Histidine--tRNA ligase of Cupriavidus taiwanensis (strain DSM 17343 / BCRC 17206 / CCUG 44338 / CIP 107171 / LMG 19424 / R1) (Ralstonia taiwanensis (strain LMG 19424)).